A 119-amino-acid polypeptide reads, in one-letter code: Large ribosomal subunit protein uL22 (119 aa).

It belongs to the universal ribosomal protein uL22 family. As to quaternary structure, part of the 50S ribosomal subunit.

Its function is as follows. This protein binds specifically to 23S rRNA; its binding is stimulated by other ribosomal proteins, e.g. L4, L17, and L20. It is important during the early stages of 50S assembly. It makes multiple contacts with different domains of the 23S rRNA in the assembled 50S subunit and ribosome. The globular domain of the protein is located near the polypeptide exit tunnel on the outside of the subunit, while an extended beta-hairpin is found that lines the wall of the exit tunnel in the center of the 70S ribosome. This chain is Large ribosomal subunit protein uL22, found in Trichormus variabilis (strain ATCC 29413 / PCC 7937) (Anabaena variabilis).